A 218-amino-acid chain; its full sequence is Cytochrome b6 (218 aa).

Residues 35–55 form a helical membrane-spanning segment; that stretch reads IFYCLGGITLVCFLIQFATGF. Residue cysteine 38 coordinates heme c. Heme b-binding residues include histidine 89 and histidine 103. 3 helical membrane-spanning segments follow: residues 93 to 113, 119 to 139, and 189 to 209; these read ASMMVLMLILHVFRVYLTGGF, LTWVTGVVMAVITVAFGVTGY, and LHTFVLPWTLAVFMLMHFLMI. Heme b contacts are provided by histidine 190 and histidine 205.

It belongs to the cytochrome b family. PetB subfamily. As to quaternary structure, the 4 large subunits of the cytochrome b6-f complex are cytochrome b6, subunit IV (17 kDa polypeptide, PetD), cytochrome f and the Rieske protein, while the 4 small subunits are PetG, PetL, PetM and PetN. The complex functions as a dimer. The cofactor is heme b. Heme c serves as cofactor.

It is found in the cellular thylakoid membrane. Its function is as follows. Component of the cytochrome b6-f complex, which mediates electron transfer between photosystem II (PSII) and photosystem I (PSI), cyclic electron flow around PSI, and state transitions. The chain is Cytochrome b6 from Prochlorococcus marinus (strain MIT 9211).